A 393-amino-acid chain; its full sequence is Formate-dependent phosphoribosylglycinamide formyltransferase (393 aa).

N(1)-(5-phospho-beta-D-ribosyl)glycinamide-binding positions include 22–23 (EL) and Glu-82. ATP-binding positions include Arg-114, Lys-155, 160 to 165 (SSGKGQ), 195 to 198 (EGFI), and Glu-203. Residues 119-308 (RLAAEELDLP…QFALHARAIL (190 aa)) enclose the ATP-grasp domain. The Mg(2+) site is built by Glu-267 and Glu-279. Residues Asp-286, Lys-356, and 363-364 (RR) each bind N(1)-(5-phospho-beta-D-ribosyl)glycinamide.

Belongs to the PurK/PurT family. As to quaternary structure, homodimer.

It catalyses the reaction N(1)-(5-phospho-beta-D-ribosyl)glycinamide + formate + ATP = N(2)-formyl-N(1)-(5-phospho-beta-D-ribosyl)glycinamide + ADP + phosphate + H(+). It participates in purine metabolism; IMP biosynthesis via de novo pathway; N(2)-formyl-N(1)-(5-phospho-D-ribosyl)glycinamide from N(1)-(5-phospho-D-ribosyl)glycinamide (formate route): step 1/1. Functionally, involved in the de novo purine biosynthesis. Catalyzes the transfer of formate to 5-phospho-ribosyl-glycinamide (GAR), producing 5-phospho-ribosyl-N-formylglycinamide (FGAR). Formate is provided by PurU via hydrolysis of 10-formyl-tetrahydrofolate. This Pseudomonas putida (strain ATCC 47054 / DSM 6125 / CFBP 8728 / NCIMB 11950 / KT2440) protein is Formate-dependent phosphoribosylglycinamide formyltransferase.